Reading from the N-terminus, the 297-residue chain is Probable endonuclease 4 (297 aa).

Zn(2+)-binding residues include His-69, His-110, Glu-145, Asp-179, His-182, His-214, Asp-227, His-229, and Glu-259.

The protein belongs to the AP endonuclease 2 family. Zn(2+) serves as cofactor.

The catalysed reaction is Endonucleolytic cleavage to 5'-phosphooligonucleotide end-products.. Functionally, endonuclease IV plays a role in DNA repair. It cleaves phosphodiester bonds at apurinic or apyrimidinic (AP) sites, generating a 3'-hydroxyl group and a 5'-terminal sugar phosphate. The protein is Probable endonuclease 4 of Listeria monocytogenes serotype 4b (strain CLIP80459).